Here is a 100-residue protein sequence, read N- to C-terminus: MSKNCCCKICCASAKKCCDEPVFISCREKCEPVIYKCYEICEPVCTPVCKPCKPICKPCKPICTPCKPVCKPVCKPICTPCKPICKPKCCPTYNVSVNLC.

This is an uncharacterized protein from Acanthamoeba polyphaga mimivirus (APMV).